Reading from the N-terminus, the 171-residue chain is Co-chaperone protein HscB homolog (171 aa).

The J domain maps to 2 to 69 (NHFELFDLPV…DSRAAYLLSL (68 aa)).

It belongs to the HscB family. As to quaternary structure, interacts with HscA and stimulates its ATPase activity.

In terms of biological role, co-chaperone involved in the maturation of iron-sulfur cluster-containing proteins. Seems to help targeting proteins to be folded toward HscA. The protein is Co-chaperone protein HscB homolog of Acinetobacter baylyi (strain ATCC 33305 / BD413 / ADP1).